Consider the following 264-residue polypeptide: Apolipoprotein A-I (264 aa).

Residues 1–18 (MKAVVLAVAVLFLTGSQA) form the signal peptide. 2 consecutive repeat copies span residues 67 to 88 (LNLLENWDTLSSAFSKLREQLG) and 89 to 110 (HVSQEFWDTFEKDTAWLREEMN). The segment at 67-264 (LNLLENWDTL…DQITKHVTTQ (198 aa)) is 10 X approximate tandem repeats. A Methionine sulfoxide modification is found at Met109. Residues 111–121 (KDLEKVKKKVQ) form a 3; half-length repeat. 3 tandem repeats follow at residues 122–143 (PFLDSFQEKMQEEVKRYRHKVE), 144–165 (PLSLELRDGAHQQLKELQEKLG), and 166–187 (PLGKDLKDHALVHMDELRSHLR). A 7; truncated repeat occupies 188–207 (TYTEEMGQILAERLGAIKES). Residue Met193 is modified to Methionine sulfoxide. Repeat unit 8 spans residues 208 to 229 (TSLAEYQTKASEHLRTFSKKAK). The stretch at 230–240 (PILEDLRQGLL) is one 9; half-length repeat. Residues 241–264 (PVAENFKTNIKNTFDQITKHVTTQ) form repeat 10.

It belongs to the apolipoprotein A1/A4/E family. Homodimer. Interacts with APOA1BP and CLU. Component of a sperm activating protein complex (SPAP), consisting of APOA1, an immunoglobulin heavy chain, an immunoglobulin light chain and albumin. Interacts with NDRG1. Interacts with SCGB3A2. Interacts with NAXE and YJEFN3. In terms of processing, glycosylated. Palmitoylated. Post-translationally, phosphorylation sites are present in the extracellular medium.

It is found in the secreted. In terms of biological role, participates in the reverse transport of cholesterol from tissues to the liver for excretion by promoting cholesterol efflux from tissues and by acting as a cofactor for the lecithin cholesterol acyltransferase (LCAT). As part of the SPAP complex, activates spermatozoa motility. This Fukomys damarensis (Damaraland mole rat) protein is Apolipoprotein A-I (Apoa1).